The primary structure comprises 262 residues: Glycine and serine-rich protein 1 (262 aa).

The N-terminal stretch at 1-21 is a signal peptide; sequence MVIKTSLTVLILGVLIAEVFC. Asn-59 carries N-linked (GlcNAc...) asparagine glycosylation. Residues 172–212 form a disordered region; sequence SNGGWGAETGSSGGMNSQSSGSQSGSWGSSSGSWGGSSGSM. The segment covering 174–184 has biased composition (gly residues); the sequence is GGWGAETGSSG. Low complexity predominate over residues 185-203; that stretch reads GMNSQSSGSQSGSWGSSSG.

Component of the acid-insoluble and acid-soluble organic matrix of calcified layers of the shell (at protein level).

The protein resides in the secreted. This Lottia gigantea (Giant owl limpet) protein is Glycine and serine-rich protein 1.